Consider the following 117-residue polypeptide: Large ribosomal subunit protein uL18 (117 aa).

The protein belongs to the universal ribosomal protein uL18 family. Part of the 50S ribosomal subunit; part of the 5S rRNA/L5/L18/L25 subcomplex. Contacts the 5S and 23S rRNAs.

In terms of biological role, this is one of the proteins that bind and probably mediate the attachment of the 5S RNA into the large ribosomal subunit, where it forms part of the central protuberance. The chain is Large ribosomal subunit protein uL18 from Photobacterium profundum (strain SS9).